Reading from the N-terminus, the 344-residue chain is Phenylalanine--tRNA ligase alpha subunit (344 aa).

Glutamate 256 is a binding site for Mg(2+).

The protein belongs to the class-II aminoacyl-tRNA synthetase family. Phe-tRNA synthetase alpha subunit type 1 subfamily. As to quaternary structure, tetramer of two alpha and two beta subunits. Requires Mg(2+) as cofactor.

The protein resides in the cytoplasm. The enzyme catalyses tRNA(Phe) + L-phenylalanine + ATP = L-phenylalanyl-tRNA(Phe) + AMP + diphosphate + H(+). The protein is Phenylalanine--tRNA ligase alpha subunit of Bacillus licheniformis (strain ATCC 14580 / DSM 13 / JCM 2505 / CCUG 7422 / NBRC 12200 / NCIMB 9375 / NCTC 10341 / NRRL NRS-1264 / Gibson 46).